Consider the following 554-residue polypeptide: Putative acyl-coenzyme A synthetase (554 aa).

195 to 206 (LLYSSGTTGPPK) is an AMP binding site.

Belongs to the ATP-dependent AMP-binding enzyme family.

The protein is Putative acyl-coenzyme A synthetase of Emericella nidulans (strain FGSC A4 / ATCC 38163 / CBS 112.46 / NRRL 194 / M139) (Aspergillus nidulans).